Here is a 280-residue protein sequence, read N- to C-terminus: Shikimate dehydrogenase (NADP(+)) (280 aa).

Shikimate contacts are provided by residues Ser-15–Ser-17 and Thr-62. Residue Lys-66 is the Proton acceptor of the active site. An NADP(+)-binding site is contributed by Glu-78. Residues Asn-87 and Asp-102 each coordinate shikimate. NADP(+) contacts are provided by residues Gly-127 to Ala-131, Asn-151 to Lys-156, and Ile-219. Tyr-221 provides a ligand contact to shikimate. An NADP(+)-binding site is contributed by Gly-242.

It belongs to the shikimate dehydrogenase family. In terms of assembly, homodimer.

The enzyme catalyses shikimate + NADP(+) = 3-dehydroshikimate + NADPH + H(+). Its pathway is metabolic intermediate biosynthesis; chorismate biosynthesis; chorismate from D-erythrose 4-phosphate and phosphoenolpyruvate: step 4/7. Involved in the biosynthesis of the chorismate, which leads to the biosynthesis of aromatic amino acids. Catalyzes the reversible NADPH linked reduction of 3-dehydroshikimate (DHSA) to yield shikimate (SA). The chain is Shikimate dehydrogenase (NADP(+)) from Bacillus subtilis (strain 168).